We begin with the raw amino-acid sequence, 813 residues long: Protein tramtrack, alpha isoform (813 aa).

Positions 33 to 98 (TDVTLAVEGQ…MYRGEVSVDQ (66 aa)) constitute a BTB domain. 4 disordered regions span residues 118–148 (EVNDDKPSPAAAAAGAGATGSESTATTPQLQ), 171–324 (ANAG…GPSE), 356–428 (TTPA…MPKK), and 526–585 (AGLP…LDDQ). Residues 125–145 (SPAAAAAGAGATGSESTATTP) are compositionally biased toward low complexity. The span at 176 to 187 (TPTLPVQPSLLS) shows a compositional bias: polar residues. Positions 192–201 (PKRKRGRPRK) are enriched in basic residues. Phosphoserine occurs at positions 203, 205, and 206. Thr209 bears the Phosphothreonine mark. A compositionally biased stretch (basic and acidic residues) spans 254–285 (HTDDLNESRDSLPSKRSKNSKDHRVVSHHEDN). 3 stretches are compositionally biased toward polar residues: residues 302 to 324 (LFGSSSTTISATAPGGSSTGPSE), 356 to 369 (TTPAQQGSPQTPTK), and 377 to 388 (ATGSNNSNSLLK). Residues 560–578 (SGKKGAKRPIQRRRVRRKA) show a composition bias toward basic residues. C2H2-type zinc fingers lie at residues 610-638 (YRCTECAKENMQKTFKNKYSFQRHAFLYH) and 646-669 (FPCPVCSKEFSRPDKMKNHLKMTH). A Phosphoserine modification is found at Ser682.

In terms of assembly, interacts with CoRest/CG33525, suggesting that it acts by recruiting a CoRest-containing corepressor complex. Interacts with phyl.

The protein resides in the nucleus. In terms of biological role, binds to a number of sites in the transcriptional regulatory region of ftz. Isoform alpha is required to repress genes that promote the R7 cell fate. Probable repressor of the transcription of the segmentation genes ftz, eve, h, odd, run, and en. May bind to the region 5'-AGGG[CT]GG-3'. Degradation of ttk is directed by binding of sinah or sina, via the adapter molecule phyl which binds to the BTB domain of ttk. The polypeptide is Protein tramtrack, alpha isoform (ttk) (Drosophila melanogaster (Fruit fly)).